We begin with the raw amino-acid sequence, 66 residues long: Large ribosomal subunit protein bL35 (66 aa).

Positions 1–26 are enriched in basic residues; sequence MPKMKTHRGAAKRFKKTGTGKLKRGH. Positions 1–48 are disordered; sequence MPKMKTHRGAAKRFKKTGTGKLKRGHAYTSHLFANKTQKQKRKLRKAT.

The protein belongs to the bacterial ribosomal protein bL35 family.

The sequence is that of Large ribosomal subunit protein bL35 from Geobacillus sp. (strain WCH70).